A 1199-amino-acid polypeptide reads, in one-letter code: DNA-directed RNA polymerase subunit beta' (1199 aa).

Residues Cys-60, Cys-62, Cys-75, and Cys-78 each coordinate Zn(2+). 3 residues coordinate Mg(2+): Asp-449, Asp-451, and Asp-453. Zn(2+) is bound by residues Cys-818, Cys-892, Cys-899, and Cys-902.

This sequence belongs to the RNA polymerase beta' chain family. As to quaternary structure, RNAP is composed of a core of 2 alpha, a beta and a beta' subunit. The core is associated with a delta subunit, and at least one of epsilon or omega. When a sigma factor is associated with the core the holoenzyme is formed, which can initiate transcription. The cofactor is Mg(2+). Zn(2+) is required as a cofactor.

It catalyses the reaction RNA(n) + a ribonucleoside 5'-triphosphate = RNA(n+1) + diphosphate. In terms of biological role, DNA-dependent RNA polymerase catalyzes the transcription of DNA into RNA using the four ribonucleoside triphosphates as substrates. The protein is DNA-directed RNA polymerase subunit beta' of Bacillus subtilis (strain 168).